A 152-amino-acid chain; its full sequence is Deoxyuridine 5'-triphosphate nucleotidohydrolase (152 aa).

Substrate is bound by residues 71–73 (RSG), Asn84, 88–90 (LID), and Met98.

This sequence belongs to the dUTPase family. The cofactor is Mg(2+).

The catalysed reaction is dUTP + H2O = dUMP + diphosphate + H(+). It participates in pyrimidine metabolism; dUMP biosynthesis; dUMP from dCTP (dUTP route): step 2/2. Functionally, this enzyme is involved in nucleotide metabolism: it produces dUMP, the immediate precursor of thymidine nucleotides and it decreases the intracellular concentration of dUTP so that uracil cannot be incorporated into DNA. This Shewanella baltica (strain OS155 / ATCC BAA-1091) protein is Deoxyuridine 5'-triphosphate nucleotidohydrolase.